A 1441-amino-acid polypeptide reads, in one-letter code: Envelopment polyprotein (1441 aa).

The first 13 residues, 1 to 13 (MICILVLITVAAA), serve as a signal peptide directing secretion. At 14-200 (SPVYQRCFQD…GSIANSICQN (187 aa)) the chain is on the lumenal side. N-linked (GlcNAc...) asparagine; by host glycosylation occurs at Asn57. The segment at 201–221 (IEIIILVTLTLLIFILLSILS) is a transmembrane helix. Over 222-305 (KTYICYLLMP…RAARVMCKSK (84 aa)) the chain is Cytoplasmic. A membrane pass occupies residues 306 to 326 (GPASILSIITAVLVLTFVTPI). At 327–361 (NSMVLGESKETFELEDLPDDMLEMASRINSYYLTC) the chain is on the lumenal side. Positions 362 to 382 (ILNYAVSWGLVIIGLLIGLLF) form a transmembrane segment. Residues 383–450 (KKYQHRFLNV…NCLVQYKAKW (68 aa)) are Cytoplasmic-facing. A membrane pass occupies residues 451–471 (MMNFLIIYIFLILIKDSAIVV). The Lumenal segment spans residues 472–1395 (QAAGTDFTTC…EPFKNLFGSY (924 aa)). N-linked (GlcNAc...) asparagine; by host glycosylation occurs at Asn490. The fusion peptide stretch occupies residues 1066 to 1087 (WGCEEFGCLAVSDGCVFGSCQD). An N-linked (GlcNAc...) asparagine; by host glycan is attached at Asn1177. A transmembrane helix spans residues 1396 to 1416 (IGIFYTFIISIVVLLVIIYVL). Residues 1417–1433 (LPICFKLRDTLRKHEDA) lie on the Cytoplasmic side of the membrane.

This sequence belongs to the orthobunyaviruses M polyprotein family. Glycoprotein C and Glycoprotein N interact with each other.

It is found in the virion membrane. The protein localises to the host Golgi apparatus membrane. The protein resides in the host endoplasmic reticulum membrane. Its function is as follows. Glycoprotein C and glycoprotein N interact with each other and are present at the surface of the virion. They are able to attach the virion to a cell receptor and to promote fusion of membranes after endocytosis of the virion. This Bunyavirus La Crosse (isolate Human/United States/L78/1978) protein is Envelopment polyprotein (GP).